The primary structure comprises 327 residues: Phenylalanine--tRNA ligase alpha subunit (327 aa).

Residue glutamate 252 participates in Mg(2+) binding.

It belongs to the class-II aminoacyl-tRNA synthetase family. Phe-tRNA synthetase alpha subunit type 1 subfamily. Tetramer of two alpha and two beta subunits. Requires Mg(2+) as cofactor.

The protein localises to the cytoplasm. The catalysed reaction is tRNA(Phe) + L-phenylalanine + ATP = L-phenylalanyl-tRNA(Phe) + AMP + diphosphate + H(+). This is Phenylalanine--tRNA ligase alpha subunit from Pectobacterium atrosepticum (strain SCRI 1043 / ATCC BAA-672) (Erwinia carotovora subsp. atroseptica).